Reading from the N-terminus, the 284-residue chain is MGEIIDGKKLAKEIQEKVTREVAELVKEGKQPGLAVVLVGDNQASRTYVRNKQKRTEEAGMKSVLIELPENVTEEKLLSVVEELNEDKTIHGILVQLPLPEHISEEKVIDTISFDKDVDGFHPVNVGNLFIGKDSFVPCTPAGIIELIKSTGTQIEGKRAVVIGRSNIVGKPVAQLLLNENATVTIAHSRTKDLPQVAKEADILVVATGLAKFVKKDYIKPGAIVIDVGMDRDENNKLCGDVDFDDVVQEAGFITPVPGGVGPMTITMLLANTLKAAKRIWKMN.

Residues 164 to 166 (GRS) and Ser-189 contribute to the NADP(+) site.

It belongs to the tetrahydrofolate dehydrogenase/cyclohydrolase family. Homodimer.

It carries out the reaction (6R)-5,10-methylene-5,6,7,8-tetrahydrofolate + NADP(+) = (6R)-5,10-methenyltetrahydrofolate + NADPH. The catalysed reaction is (6R)-5,10-methenyltetrahydrofolate + H2O = (6R)-10-formyltetrahydrofolate + H(+). The protein operates within one-carbon metabolism; tetrahydrofolate interconversion. Catalyzes the oxidation of 5,10-methylenetetrahydrofolate to 5,10-methenyltetrahydrofolate and then the hydrolysis of 5,10-methenyltetrahydrofolate to 10-formyltetrahydrofolate. This is Bifunctional protein FolD from Listeria monocytogenes serovar 1/2a (strain ATCC BAA-679 / EGD-e).